The sequence spans 318 residues: Methionyl-tRNA formyltransferase (318 aa).

Residue Ser112–Pro115 participates in (6S)-5,6,7,8-tetrahydrofolate binding.

The protein belongs to the Fmt family.

The enzyme catalyses L-methionyl-tRNA(fMet) + (6R)-10-formyltetrahydrofolate = N-formyl-L-methionyl-tRNA(fMet) + (6S)-5,6,7,8-tetrahydrofolate + H(+). Its function is as follows. Attaches a formyl group to the free amino group of methionyl-tRNA(fMet). The formyl group appears to play a dual role in the initiator identity of N-formylmethionyl-tRNA by promoting its recognition by IF2 and preventing the misappropriation of this tRNA by the elongation apparatus. This Shewanella baltica (strain OS155 / ATCC BAA-1091) protein is Methionyl-tRNA formyltransferase.